The sequence spans 474 residues: PRAME family member 2 (474 aa).

Residues 97–124 (RWKLQVLDLRDVDENFWARWPGAWALSC) form an LRR 1; degenerate repeat. An LRR 2; degenerate repeat occupies 179–203 (HLCCSKLVNYLTPIKYLRKSLKIIY). The LRR 3; degenerate repeat unit spans residues 204 to 230 (INSIGELEIHNTCWPHLIRKLYCYLKE). The LRR 4; degenerate repeat unit spans residues 231–265 (MKTLCKLVFSRCHHYTSDNELEGWLVTRFTSVFLR). LRR repeat units lie at residues 266–291 (LEHL…IRCL), 292–323 (QNPL…GYLK), 324–342 (HLNL…PLGA), 348–375 (AASL…GLSC), and 376–400 (CSQL…LLRH).

This sequence belongs to the PRAME family.

The protein is PRAME family member 2 of Homo sapiens (Human).